A 359-amino-acid chain; its full sequence is Probable isoaspartyl peptidase/L-asparaginase 3 (359 aa).

Residue Thr224 is the Nucleophile of the active site. Substrate-binding positions include 252–255 (RVGD) and 275–278 (TGDG).

This sequence belongs to the Ntn-hydrolase family. Heterotetramer of two alpha and two beta chains arranged as a dimer of alpha/beta heterodimers. Cleaved into an alpha and beta chain by autocatalysis; this activates the enzyme. The N-terminal residue of the beta subunit is responsible for the nucleophile hydrolase activity.

It catalyses the reaction Cleavage of a beta-linked Asp residue from the N-terminus of a polypeptide.. Acts in asparagine catabolism but also in the final steps of protein degradation via hydrolysis of a range of isoaspartyl dipeptides. The polypeptide is Probable isoaspartyl peptidase/L-asparaginase 3 (Arabidopsis thaliana (Mouse-ear cress)).